The following is a 164-amino-acid chain: UPF0114 protein YqhA (164 aa).

Helical transmembrane passes span 15 to 35 (LLAPVYFGLSLALIALALKFF), 53 to 73 (LILVLLSLVDMTLVGGLLVMV), and 136 to 156 (LMWYVIIHLTFVLSAFVMGYL).

It belongs to the UPF0114 family.

The protein resides in the cell membrane. The polypeptide is UPF0114 protein YqhA (Salmonella agona (strain SL483)).